Reading from the N-terminus, the 277-residue chain is 4-hydroxy-3-methylbut-2-enyl diphosphate reductase (277 aa).

Position 12 (Cys12) interacts with [4Fe-4S] cluster. Residues His36 and His70 each coordinate (2E)-4-hydroxy-3-methylbut-2-enyl diphosphate. His36 and His70 together coordinate dimethylallyl diphosphate. 2 residues coordinate isopentenyl diphosphate: His36 and His70. Cys92 is a [4Fe-4S] cluster binding site. (2E)-4-hydroxy-3-methylbut-2-enyl diphosphate is bound at residue His120. Dimethylallyl diphosphate is bound at residue His120. His120 is an isopentenyl diphosphate binding site. Glu122 functions as the Proton donor in the catalytic mechanism. A (2E)-4-hydroxy-3-methylbut-2-enyl diphosphate-binding site is contributed by Thr158. Cys186 provides a ligand contact to [4Fe-4S] cluster. The (2E)-4-hydroxy-3-methylbut-2-enyl diphosphate site is built by Ser214, Asn216, and Ser258. Ser214, Asn216, and Ser258 together coordinate dimethylallyl diphosphate. The isopentenyl diphosphate site is built by Ser214, Asn216, and Ser258.

It belongs to the IspH family. [4Fe-4S] cluster is required as a cofactor.

It carries out the reaction isopentenyl diphosphate + 2 oxidized [2Fe-2S]-[ferredoxin] + H2O = (2E)-4-hydroxy-3-methylbut-2-enyl diphosphate + 2 reduced [2Fe-2S]-[ferredoxin] + 2 H(+). The catalysed reaction is dimethylallyl diphosphate + 2 oxidized [2Fe-2S]-[ferredoxin] + H2O = (2E)-4-hydroxy-3-methylbut-2-enyl diphosphate + 2 reduced [2Fe-2S]-[ferredoxin] + 2 H(+). It functions in the pathway isoprenoid biosynthesis; dimethylallyl diphosphate biosynthesis; dimethylallyl diphosphate from (2E)-4-hydroxy-3-methylbutenyl diphosphate: step 1/1. It participates in isoprenoid biosynthesis; isopentenyl diphosphate biosynthesis via DXP pathway; isopentenyl diphosphate from 1-deoxy-D-xylulose 5-phosphate: step 6/6. Functionally, catalyzes the conversion of 1-hydroxy-2-methyl-2-(E)-butenyl 4-diphosphate (HMBPP) into a mixture of isopentenyl diphosphate (IPP) and dimethylallyl diphosphate (DMAPP). Acts in the terminal step of the DOXP/MEP pathway for isoprenoid precursor biosynthesis. The protein is 4-hydroxy-3-methylbut-2-enyl diphosphate reductase of Campylobacter jejuni subsp. jejuni serotype O:2 (strain ATCC 700819 / NCTC 11168).